The sequence spans 96 residues: ATP synthase subunit c (96 aa).

2 helical membrane passes run Phe-9–Ile-29 and Ile-58–Ile-78.

The protein belongs to the ATPase C chain family. As to quaternary structure, F-type ATPases have 2 components, F(1) - the catalytic core - and F(0) - the membrane proton channel. F(1) has five subunits: alpha(3), beta(3), gamma(1), delta(1), epsilon(1). F(0) has three main subunits: a(1), b(2) and c(10-14). The alpha and beta chains form an alternating ring which encloses part of the gamma chain. F(1) is attached to F(0) by a central stalk formed by the gamma and epsilon chains, while a peripheral stalk is formed by the delta and b chains.

It localises to the cell inner membrane. F(1)F(0) ATP synthase produces ATP from ADP in the presence of a proton or sodium gradient. F-type ATPases consist of two structural domains, F(1) containing the extramembraneous catalytic core and F(0) containing the membrane proton channel, linked together by a central stalk and a peripheral stalk. During catalysis, ATP synthesis in the catalytic domain of F(1) is coupled via a rotary mechanism of the central stalk subunits to proton translocation. Functionally, key component of the F(0) channel; it plays a direct role in translocation across the membrane. A homomeric c-ring of between 10-14 subunits forms the central stalk rotor element with the F(1) delta and epsilon subunits. The sequence is that of ATP synthase subunit c from Desulfosudis oleivorans (strain DSM 6200 / JCM 39069 / Hxd3) (Desulfococcus oleovorans).